The following is a 353-amino-acid chain: uncharacterized protein (353 aa).

3 disordered regions span residues 1-24, 245-280, and 305-353; these read MSTS…QQSQ, NKSS…EKVP, and AAGK…DLNN. Low complexity predominate over residues 9-24; it reads NKKNNTKQQKYQQQSQ. Residues 254–280 show a composition bias toward basic and acidic residues; sequence KSGDKSTVKSTDKQVEKKVEESSEKVP. Positions 321-332 are enriched in low complexity; sequence VTTSTSESTVEV. Over residues 342-353 the composition is skewed to acidic residues; the sequence is EPDEEVFEDLNN.

This is an uncharacterized protein from Acanthamoeba polyphaga mimivirus (APMV).